Here is a 343-residue protein sequence, read N- to C-terminus: Selenide, water dikinase (343 aa).

Residue C15 is part of the active site. ATP contacts are provided by residues K18 and 46–48 (NKD). D49 provides a ligand contact to Mg(2+). ATP-binding positions include D66, D89, and 137–139 (GHS). D89 contacts Mg(2+). D225 is a binding site for Mg(2+).

The protein belongs to the selenophosphate synthase 1 family. Class I subfamily. Homodimer. Requires Mg(2+) as cofactor.

It carries out the reaction hydrogenselenide + ATP + H2O = selenophosphate + AMP + phosphate + 2 H(+). Synthesizes selenophosphate from selenide and ATP. The sequence is that of Selenide, water dikinase from Sulfurovum sp. (strain NBC37-1).